The sequence spans 134 residues: Large ribosomal subunit protein uL18 (134 aa).

Belongs to the universal ribosomal protein uL18 family. In terms of assembly, part of the 50S ribosomal subunit; part of the 5S rRNA/L5/L18/L25 subcomplex. Contacts the 5S and 23S rRNAs.

Its function is as follows. This is one of the proteins that bind and probably mediate the attachment of the 5S RNA into the large ribosomal subunit, where it forms part of the central protuberance. The sequence is that of Large ribosomal subunit protein uL18 from Corynebacterium efficiens (strain DSM 44549 / YS-314 / AJ 12310 / JCM 11189 / NBRC 100395).